Reading from the N-terminus, the 130-residue chain is Small ribosomal subunit protein uS11c (130 aa).

This sequence belongs to the universal ribosomal protein uS11 family. In terms of assembly, part of the 30S ribosomal subunit.

The protein localises to the plastid. It is found in the chloroplast. This chain is Small ribosomal subunit protein uS11c, found in Drimys granadensis.